We begin with the raw amino-acid sequence, 367 residues long: tRNA/tmRNA (uracil-C(5))-methyltransferase (367 aa).

Residues Gln190, Tyr218, Asn223, Glu239, and Asp299 each coordinate S-adenosyl-L-methionine. The active-site Nucleophile is the Cys324. The active-site Proton acceptor is the Glu358.

This sequence belongs to the class I-like SAM-binding methyltransferase superfamily. RNA M5U methyltransferase family. TrmA subfamily.

It catalyses the reaction uridine(54) in tRNA + S-adenosyl-L-methionine = 5-methyluridine(54) in tRNA + S-adenosyl-L-homocysteine + H(+). The catalysed reaction is uridine(341) in tmRNA + S-adenosyl-L-methionine = 5-methyluridine(341) in tmRNA + S-adenosyl-L-homocysteine + H(+). Its function is as follows. Dual-specificity methyltransferase that catalyzes the formation of 5-methyluridine at position 54 (m5U54) in all tRNAs, and that of position 341 (m5U341) in tmRNA (transfer-mRNA). The protein is tRNA/tmRNA (uracil-C(5))-methyltransferase of Serratia proteamaculans (strain 568).